Consider the following 132-residue polypeptide: NAD(P) transhydrogenase subunit alpha part 2 (132 aa).

The next 3 helical transmembrane spans lie at 43–63 (PLVF…YVVW), 72–92 (PLMS…MIAI), and 103–123 (LLGS…FIVT).

Complex of an alpha and a beta chain; in Rickettsia, the alpha chain seems to be made of two subunits.

It is found in the cell inner membrane. It carries out the reaction NAD(+) + NADPH + H(+)(in) = NADH + NADP(+) + H(+)(out). Functionally, the transhydrogenation between NADH and NADP is coupled to respiration and ATP hydrolysis and functions as a proton pump across the membrane. The protein is NAD(P) transhydrogenase subunit alpha part 2 (pntAB) of Rickettsia prowazekii (strain Madrid E).